The following is a 1513-amino-acid chain: DNA-directed RNA polymerase subunit beta'' (1513 aa).

The Zn(2+) site is built by C220, C296, C303, and C306. Residues 644 to 769 (RTREKDSENE…EYGNPEEDSV (126 aa)) are disordered. Residues 659 to 679 (NEYRTREEECKTLEDEYRTRE) show a composition bias toward basic and acidic residues. The span at 680 to 707 (EEYETLEDEYGIPENEYETLEDEYGILE) shows a compositional bias: acidic residues. Over residues 726-737 (NKYRPREDKYGT) the composition is skewed to basic and acidic residues. Over residues 738–767 (LEEDSEDEHGTLEEDSEEDSEDEYGNPEED) the composition is skewed to acidic residues.

The protein belongs to the RNA polymerase beta' chain family. RpoC2 subfamily. In terms of assembly, in plastids the minimal PEP RNA polymerase catalytic core is composed of four subunits: alpha, beta, beta', and beta''. When a (nuclear-encoded) sigma factor is associated with the core the holoenzyme is formed, which can initiate transcription. The cofactor is Zn(2+).

It is found in the plastid. The protein localises to the chloroplast. The enzyme catalyses RNA(n) + a ribonucleoside 5'-triphosphate = RNA(n+1) + diphosphate. Functionally, DNA-dependent RNA polymerase catalyzes the transcription of DNA into RNA using the four ribonucleoside triphosphates as substrates. In Oryza sativa (Rice), this protein is DNA-directed RNA polymerase subunit beta''.